We begin with the raw amino-acid sequence, 436 residues long: Enolase (436 aa).

Glutamine 167 contacts (2R)-2-phosphoglycerate. Glutamate 209 (proton donor) is an active-site residue. Mg(2+)-binding residues include aspartate 246, glutamate 291, and aspartate 318. Residues lysine 343, arginine 372, serine 373, and lysine 394 each coordinate (2R)-2-phosphoglycerate. Lysine 343 functions as the Proton acceptor in the catalytic mechanism.

Belongs to the enolase family. As to quaternary structure, component of the RNA degradosome, a multiprotein complex involved in RNA processing and mRNA degradation. It depends on Mg(2+) as a cofactor.

The protein localises to the cytoplasm. It is found in the secreted. Its subcellular location is the cell surface. It carries out the reaction (2R)-2-phosphoglycerate = phosphoenolpyruvate + H2O. It functions in the pathway carbohydrate degradation; glycolysis; pyruvate from D-glyceraldehyde 3-phosphate: step 4/5. Functionally, catalyzes the reversible conversion of 2-phosphoglycerate (2-PG) into phosphoenolpyruvate (PEP). It is essential for the degradation of carbohydrates via glycolysis. This is Enolase from Haemophilus influenzae (strain ATCC 51907 / DSM 11121 / KW20 / Rd).